The chain runs to 289 residues: 7-methylguanosine phosphate-specific 5'-nucleotidase (289 aa).

The active-site Nucleophile is Asp-38. Positions 38 and 40 each coordinate Mg(2+). Asp-40 (proton donor) is an active-site residue. Glu-85 contributes to the CMP binding site. Glu-85 contacts N(7)-methyl-GMP. Substrate-binding positions include 153–154 (SA) and Lys-202. Asp-227 lines the Mg(2+) pocket.

The protein belongs to the pyrimidine 5'-nucleotidase family. As to quaternary structure, monomer.

Its subcellular location is the cytoplasm. The catalysed reaction is N(7)-methyl-GMP + H2O = N(7)-methylguanosine + phosphate. It carries out the reaction CMP + H2O = cytidine + phosphate. It catalyses the reaction a ribonucleoside 5'-phosphate + H2O = a ribonucleoside + phosphate. Functionally, specifically hydrolyzes 7-methylguanosine monophosphate (m(7)GMP) to 7-methylguanosine and inorganic phosphate. The specific activity for m(7)GMP may protect cells against undesired salvage of m(7)GMP and its incorporation into nucleic acids. Also has weak activity for CMP. UMP and purine nucleotides are poor substrates. This Gallus gallus (Chicken) protein is 7-methylguanosine phosphate-specific 5'-nucleotidase (NT5C3B).